Here is a 278-residue protein sequence, read N- to C-terminus: MSISPQEVKKLRDATGAGFGDCKKALSVAGGDFELAKKKLKEMGIVSADKRSGRDAKEGRVFSYVNTERVGLLLIACETDFVAMNSDFVAFGNSLIKQLVESGRDILDEHQELEIKNLAATIKENIYVSKVYISNIASNELVKNYLHGDHSKIGVFVKFKIDDALKMQDEKLNNFAMDLALHVAAFSPLYLSVNDICLNYIKEQEEIFMRQMESSGKPENVVKGIISGKLKKHLGEIALLEQGFVKDDKLTVKEKIEEVSKLILSKIEVVEFKYLSVG.

Residues 79 to 82 (TDFV) form an involved in Mg(2+) ion dislocation from EF-Tu region.

This sequence belongs to the EF-Ts family.

The protein resides in the cytoplasm. In terms of biological role, associates with the EF-Tu.GDP complex and induces the exchange of GDP to GTP. It remains bound to the aminoacyl-tRNA.EF-Tu.GTP complex up to the GTP hydrolysis stage on the ribosome. This chain is Elongation factor Ts, found in Borrelia recurrentis (strain A1).